The chain runs to 570 residues: MRYSQYFIPTVKETPSDAEVVSHKLMLRAGMIRKLAAGIYNYLPLGLRSIRKVEQIVREEMNRAGAIELLMPSVQPAELWQESKRWEQYGKELLRFKDRKDAEFCLGPTHEEVITDLVRREVKSYRQLPLNLYQVQSKFRDEIRPRFGLMRGREFIMKDAYSFDVSSEAADTSYDKMYQAYRRIFQRCGLKFRAVEADTGSIGGSSSHEFMVLADSGEDAIVSCTACEYAANVEKAEARLFPSEHAEPRELEKVETPQKRSVEEVTTFLGIPASSLVKTLLCVADGEPVAALVRGDHDLNEIKLKHLLGCEELEMASEEIVERVTGAPVGFAGPVGLKIKIVADLTIQGMKNFVTGGNARDLHFKNVNIGRDFTPALIADIRNVVHGDPCPRCEAGHLEMWRGIEVGHVFKLGTKYSESLRATFLDADGKEQVIFMGCYGIGISRTVAACIEQNHDADGIIFPIPIAPFHCIISAVSTKDAEVVAACDELYRALTAVGVEVLFDDRDERPGSKFKDADLIGIPLRIVVGSKNLAEGKVELKSRKGGEVSLLPLAEAVETVKGLVVAALNQ.

This sequence belongs to the class-II aminoacyl-tRNA synthetase family. ProS type 1 subfamily. As to quaternary structure, homodimer.

It is found in the cytoplasm. The enzyme catalyses tRNA(Pro) + L-proline + ATP = L-prolyl-tRNA(Pro) + AMP + diphosphate. Catalyzes the attachment of proline to tRNA(Pro) in a two-step reaction: proline is first activated by ATP to form Pro-AMP and then transferred to the acceptor end of tRNA(Pro). As ProRS can inadvertently accommodate and process non-cognate amino acids such as alanine and cysteine, to avoid such errors it has two additional distinct editing activities against alanine. One activity is designated as 'pretransfer' editing and involves the tRNA(Pro)-independent hydrolysis of activated Ala-AMP. The other activity is designated 'posttransfer' editing and involves deacylation of mischarged Ala-tRNA(Pro). The misacylated Cys-tRNA(Pro) is not edited by ProRS. The sequence is that of Proline--tRNA ligase from Geobacter metallireducens (strain ATCC 53774 / DSM 7210 / GS-15).